A 386-amino-acid chain; its full sequence is MRSQVIEYPMSLVRLAHELPIEAPRTAWLDSIIKGDCVSALERLPDHSVDVIFADPPYNLQLGGDLHRPDQSMVSAVDDHWDQFESFQAYDAFTRAWLLACRRVLKPNGTIWVIGSYHNIFRVGTQLQDLGFWLLNDIVWRKTNPMPNFRGRRFQNAHETLIWASREQKGKGYTFNYEAMKAANDDVQMRSDWLFPICTGSERLKDENGDKVHPTQKPEALLARIMMASSKPGDVILDPFFGSGTTGAVAKRLGRHFVGIEREQPYIDAATARINAVEPLGKAELTVMTGKRAEPRVAFTSVMEAGLLRPGTVLCDERRRFAAIVRADGTLTANGEAGSIHRIGARVQGFDACNGWTFWHFEENGVLKPIDALRKIIREQMAAAGA.

Residues 280–382 enclose the RAMA domain; that stretch reads LGKAELTVMT…LRKIIREQMA (103 aa).

This sequence belongs to the N(4)/N(6)-methyltransferase family.

The catalysed reaction is a 2'-deoxyadenosine in DNA + S-adenosyl-L-methionine = an N(6)-methyl-2'-deoxyadenosine in DNA + S-adenosyl-L-homocysteine + H(+). A beta subtype methylase that recognizes the double-stranded sequence 5'-GANTC-3' and methylates A-2 on both strands. CcrM-mediated methylation has important cellular functions. Contributes to the accurate cell-cycle control of DNA replication and cellular morphology. In Brucella abortus (strain S19), this protein is DNA methyltransferase CcrM (ccrM).